The following is a 410-amino-acid chain: S-adenosylmethionine synthase (410 aa).

H21 lines the ATP pocket. D23 is a binding site for Mg(2+). E49 lines the K(+) pocket. E62 and Q105 together coordinate L-methionine. The flexible loop stretch occupies residues 105 to 115 (QSQEIGAGVDQ). The segment at 107–133 (QEIGAGVDQSHEVRSGENTDADDQAGA) is disordered. ATP-binding positions include 180-182 (DGK), D261, 267-268 (RK), A284, and K288. D261 contacts L-methionine. L-methionine is bound at residue K292.

The protein belongs to the AdoMet synthase family. In terms of assembly, homotetramer; dimer of dimers. Mg(2+) is required as a cofactor. It depends on K(+) as a cofactor.

The protein localises to the cytoplasm. The enzyme catalyses L-methionine + ATP + H2O = S-adenosyl-L-methionine + phosphate + diphosphate. It functions in the pathway amino-acid biosynthesis; S-adenosyl-L-methionine biosynthesis; S-adenosyl-L-methionine from L-methionine: step 1/1. In terms of biological role, catalyzes the formation of S-adenosylmethionine (AdoMet) from methionine and ATP. The overall synthetic reaction is composed of two sequential steps, AdoMet formation and the subsequent tripolyphosphate hydrolysis which occurs prior to release of AdoMet from the enzyme. The sequence is that of S-adenosylmethionine synthase from Corynebacterium diphtheriae (strain ATCC 700971 / NCTC 13129 / Biotype gravis).